Here is a 180-residue protein sequence, read N- to C-terminus: tRNA (cytidine(56)-2'-O)-methyltransferase (180 aa).

Residues Leu-84 and 112–116 (GAEKV) contribute to the S-adenosyl-L-methionine site.

This sequence belongs to the aTrm56 family. As to quaternary structure, homodimer.

The protein resides in the cytoplasm. It catalyses the reaction cytidine(56) in tRNA + S-adenosyl-L-methionine = 2'-O-methylcytidine(56) in tRNA + S-adenosyl-L-homocysteine + H(+). Functionally, specifically catalyzes the AdoMet-dependent 2'-O-ribose methylation of cytidine at position 56 in tRNAs. This Natronomonas pharaonis (strain ATCC 35678 / DSM 2160 / CIP 103997 / JCM 8858 / NBRC 14720 / NCIMB 2260 / Gabara) (Halobacterium pharaonis) protein is tRNA (cytidine(56)-2'-O)-methyltransferase.